The primary structure comprises 152 residues: ESAT-6 secretion machinery protein EssA (152 aa).

The Cytoplasmic portion of the chain corresponds to M1–K114. The helical transmembrane segment at I115–S135 threads the bilayer. Residues I136–I152 lie on the Extracellular side of the membrane.

This sequence belongs to the EssA family.

The protein localises to the cell membrane. Functionally, component of the ESAT-6 secretion system (Ess). Required for the secretion of EsxA and EsxB. The sequence is that of ESAT-6 secretion machinery protein EssA from Staphylococcus aureus (strain Mu50 / ATCC 700699).